A 189-amino-acid chain; its full sequence is GTP cyclohydrolase 1 (189 aa).

The Zn(2+) site is built by cysteine 78, histidine 81, and cysteine 150.

The protein belongs to the GTP cyclohydrolase I family. In terms of assembly, toroid-shaped homodecamer, composed of two pentamers of five dimers.

The enzyme catalyses GTP + H2O = 7,8-dihydroneopterin 3'-triphosphate + formate + H(+). Its pathway is cofactor biosynthesis; 7,8-dihydroneopterin triphosphate biosynthesis; 7,8-dihydroneopterin triphosphate from GTP: step 1/1. The protein is GTP cyclohydrolase 1 of Bacillus pumilus (strain SAFR-032).